The primary structure comprises 701 residues: DUF724 domain-containing protein 6 (701 aa).

Disordered regions lie at residues 299-353 (MKTK…KRAN) and 374-452 (VEPV…DESC). Residues 326–340 (LNLEKSAETLTKAES) show a composition bias toward basic and acidic residues. The span at 381–399 (RVRTATPLKQTKADTQGKS) shows a compositional bias: polar residues. 3 stretches are compositionally biased toward basic and acidic residues: residues 403-412 (KTLEPMRDEN), 421-430 (KVLEEKNSEK), and 437-449 (RQEE…KETD). One can recognise a DUF724 domain in the interval 514–700 (LPFAKKSPFW…LEFQSTASAP (187 aa)). A coiled-coil region spans residues 626-670 (LEKKIEAGEIEGHTYEEEMAELELKILELKRQQVVAKEMKEATDK).

Expressed in roots, stems and flowers.

It is found in the nucleus. Its function is as follows. May be involved in the polar growth of plant cells via transportation of RNAs. This Arabidopsis thaliana (Mouse-ear cress) protein is DUF724 domain-containing protein 6.